Consider the following 253-residue polypeptide: DNA repair protein RecO (253 aa).

Belongs to the RecO family.

Functionally, involved in DNA repair and RecF pathway recombination. The chain is DNA repair protein RecO from Dehalococcoides mccartyi (strain ATCC BAA-2100 / JCM 16839 / KCTC 5957 / BAV1).